A 593-amino-acid chain; its full sequence is MLO-like protein 8 (593 aa).

Residues 1 to 46 (MGIIDGSLLRRLICLCLWCLLGGGVTVVTAEDEKKVVHKQLNQTPT) are Extracellular-facing. The helical transmembrane segment at 47 to 67 (WAVAAVCTFFIVVSVLLEKLL) threads the bilayer. The Cytoplasmic segment spans residues 68-92 (HKVGKVLWDRHKTALLDALEKIKAE). The helical transmembrane segment at 93-113 (LMVLGFISLLLTFGQTYILDI) threads the bilayer. Topologically, residues 114–181 (CIPSHVARTM…ISAEALHQLH (68 aa)) are extracellular. The helical transmembrane segment at 182 to 202 (ILIFFLAIFHVLYSFLTMMLG) threads the bilayer. The Cytoplasmic portion of the chain corresponds to 203 to 304 (RLKIRGWKHW…IKRSLEDDFK (102 aa)). A helical membrane pass occupies residues 305–325 (VVVGVSPVLWGSFVLFLLLNI). Position 326 (D326) is a topological domain, extracellular. Residues 327 to 347 (GFKMMFIGTAIPVIIILAVGT) form a helical membrane-spanning segment. The Cytoplasmic segment spans residues 348–393 (KLQAIMTRMALGITDRHAVVQGMPLVQGNDEYFWFGRPHLILHLMH). A helical transmembrane segment spans residues 394–414 (FALFQNAFQITYFFWIWYSFG). Over 415–430 (SDSCYHPNFKIALVKV) the chain is Extracellular. A helical membrane pass occupies residues 431-451 (AIALGVLCLCSYITLPLYALV). Residues 452-593 (TQMGSRMKKS…APSNESSQDR (142 aa)) are Cytoplasmic-facing. The interval 465 to 486 (EQTSKALKKWRMAVKKKKGVKA) is calmodulin-binding. The interval 481–593 (KKGVKATTKR…APSNESSQDR (113 aa)) is disordered. Positions 489–512 (KRLGGDGSASPTASTVRSTSSVRS) are enriched in low complexity. Over residues 528–539 (LDPETSDLDTDN) the composition is skewed to acidic residues. Residues 567-579 (TSRDTETDSKEFS) are compositionally biased toward basic and acidic residues.

It belongs to the MLO family.

It is found in the membrane. Its function is as follows. May be involved in modulation of pathogen defense and leaf cell death. Activity seems to be regulated by Ca(2+)-dependent calmodulin binding and seems not to require heterotrimeric G proteins. In Arabidopsis thaliana (Mouse-ear cress), this protein is MLO-like protein 8 (MLO8).